Consider the following 505-residue polypeptide: Trans-cinnamate 4-monooxygenase (505 aa).

A helical transmembrane segment spans residues 3-23 (LLLLEKTLLALFLAAITAITI). (E)-cinnamate is bound by residues 213–218 (RSRLAQ) and Ala-306. Cys-447 serves as a coordination point for heme.

Belongs to the cytochrome P450 family. Requires heme as cofactor.

Its subcellular location is the membrane. It catalyses the reaction (E)-cinnamate + reduced [NADPH--hemoprotein reductase] + O2 = (E)-4-coumarate + oxidized [NADPH--hemoprotein reductase] + H2O + H(+). It functions in the pathway phenylpropanoid metabolism; trans-4-coumarate biosynthesis; trans-4-coumarate from trans-cinnamate: step 1/1. Its function is as follows. Catalyzes the first oxidative step of the phenylpropanoid pathway in higher plants by transforming trans-cinnamate into p-coumarate. The compounds formed by this pathway are essential components for lignification, pollination, and defense against ultraviolet light, predators and pathogens. The polypeptide is Trans-cinnamate 4-monooxygenase (CYP73A9) (Pisum sativum (Garden pea)).